Here is a 46-residue protein sequence, read N- to C-terminus: Esculentin-1a/b (46 aa).

Residues Cys40 and Cys46 are joined by a disulfide bond.

Belongs to the frog skin active peptide (FSAP) family. Esculentin subfamily. In terms of tissue distribution, expressed by the skin glands.

Its subcellular location is the secreted. Antimicrobial peptide. Stimulates insulin secretion by BRIN-BD11 cells in vitro. Shows hemolytic activity. The chain is Esculentin-1a/b from Pelophylax ridibundus (Marsh frog).